A 512-amino-acid chain; its full sequence is Bifunctional pantoate ligase/cytidylate kinase (512 aa).

The pantoate--beta-alanine ligase stretch occupies residues 1-276 (MKLQTSADLQ…CGEARLIDHR (276 aa)). 27 to 34 (MGALHQGH) lines the ATP pocket. The Proton donor role is filled by His34. (R)-pantoate is bound at residue Gln58. Gln58 serves as a coordination point for beta-alanine. Residue 147–150 (GEKD) coordinates ATP. Gln153 is a binding site for (R)-pantoate. ATP is bound by residues Leu176 and 184–187 (LSSR). Positions 277 to 512 (VLMSRLPILA…VPVEALNADA (236 aa)) are cytidylate kinase.

In the N-terminal section; belongs to the pantothenate synthetase family. The protein in the C-terminal section; belongs to the cytidylate kinase family. Type 1 subfamily.

Its subcellular location is the cytoplasm. It carries out the reaction (R)-pantoate + beta-alanine + ATP = (R)-pantothenate + AMP + diphosphate + H(+). The catalysed reaction is CMP + ATP = CDP + ADP. It catalyses the reaction dCMP + ATP = dCDP + ADP. Its pathway is cofactor biosynthesis; (R)-pantothenate biosynthesis; (R)-pantothenate from (R)-pantoate and beta-alanine: step 1/1. Functionally, catalyzes the condensation of pantoate with beta-alanine in an ATP-dependent reaction via a pantoyl-adenylate intermediate. In terms of biological role, catalyzes the transfer of a phosphate group from ATP to either CMP or dCMP to form CDP or dCDP and ADP, respectively. This is Bifunctional pantoate ligase/cytidylate kinase from Synechococcus sp. (strain RCC307).